Reading from the N-terminus, the 162-residue chain is 2-C-methyl-D-erythritol 2,4-cyclodiphosphate synthase (162 aa).

D12 and H14 together coordinate a divalent metal cation. 4-CDP-2-C-methyl-D-erythritol 2-phosphate contacts are provided by residues 12–14 (DVH) and 38–39 (HS). H46 lines the a divalent metal cation pocket. Residues 60 to 62 (DIG), 65 to 69 (FPDTD), F143, and R146 contribute to the 4-CDP-2-C-methyl-D-erythritol 2-phosphate site.

Belongs to the IspF family. Homotrimer. It depends on a divalent metal cation as a cofactor.

The catalysed reaction is 4-CDP-2-C-methyl-D-erythritol 2-phosphate = 2-C-methyl-D-erythritol 2,4-cyclic diphosphate + CMP. It participates in isoprenoid biosynthesis; isopentenyl diphosphate biosynthesis via DXP pathway; isopentenyl diphosphate from 1-deoxy-D-xylulose 5-phosphate: step 4/6. Involved in the biosynthesis of isopentenyl diphosphate (IPP) and dimethylallyl diphosphate (DMAPP), two major building blocks of isoprenoid compounds. Catalyzes the conversion of 4-diphosphocytidyl-2-C-methyl-D-erythritol 2-phosphate (CDP-ME2P) to 2-C-methyl-D-erythritol 2,4-cyclodiphosphate (ME-CPP) with a corresponding release of cytidine 5-monophosphate (CMP). The polypeptide is 2-C-methyl-D-erythritol 2,4-cyclodiphosphate synthase (Azoarcus sp. (strain BH72)).